We begin with the raw amino-acid sequence, 192 residues long: Ion-translocating oxidoreductase complex subunit A (192 aa).

6 consecutive transmembrane segments (helical) span residues 5–25 (LLLLISTVLVNNFVLVKFLGL), 39–59 (IGMSMATTFVLTLASILSYLV), 65–85 (LPFDLSYLRTMSFILVIAVVV), 102–122 (ALGIYLPLITTNCAVLGVALL), 134–154 (AIYGFGAAVGFSLVLILFSAM), and 171–191 (AIAMITAGLMSLAFMGFTGLV).

It belongs to the NqrDE/RnfAE family. In terms of assembly, the complex is composed of six subunits: RnfA, RnfB, RnfC, RnfD, RnfE and RnfG.

Its subcellular location is the cell inner membrane. Its function is as follows. Part of a membrane-bound complex that couples electron transfer with translocation of ions across the membrane. In Shewanella sp. (strain ANA-3), this protein is Ion-translocating oxidoreductase complex subunit A.